A 150-amino-acid polypeptide reads, in one-letter code: UPF0506 protein SJCHGC03047 (150 aa).

A signal peptide spans methionine 1–serine 18. N-linked (GlcNAc...) asparagine glycosylation is found at asparagine 20, asparagine 48, and asparagine 110. 3 disulfide bridges follow: cysteine 116–cysteine 130, cysteine 123–cysteine 134, and cysteine 129–cysteine 139.

It belongs to the UPF0506 family.

Its subcellular location is the secreted. The sequence is that of UPF0506 protein SJCHGC03047 from Schistosoma japonicum (Blood fluke).